The following is a 334-amino-acid chain: S-adenosylmethionine decarboxylase proenzyme 1 (334 aa).

Residue phenylalanine 7 participates in substrate binding. Catalysis depends on residues glutamate 8 and glutamate 11. Glutamate 67 provides a ligand contact to substrate. Serine 68 acts as the Schiff-base intermediate with substrate; via pyruvic acid in catalysis. Serine 68 carries the post-translational modification Pyruvic acid (Ser); by autocatalysis. Residue cysteine 82 is the Proton donor; for catalytic activity of the active site. Position 223 (phenylalanine 223) interacts with substrate. Catalysis depends on proton acceptor; for processing activity residues serine 229 and histidine 243. A substrate-binding site is contributed by glutamate 247. Position 298 is a phosphoserine (serine 298).

This sequence belongs to the eukaryotic AdoMetDC family. Heterotetramer of two alpha and two beta chains. The cofactor is pyruvate. In terms of processing, is synthesized initially as an inactive proenzyme. Formation of the active enzyme involves a self-maturation process in which the active site pyruvoyl group is generated from an internal serine residue via an autocatalytic post-translational modification. Two non-identical subunits are generated from the proenzyme in this reaction, and the pyruvate is formed at the N-terminus of the alpha chain, which is derived from the carboxyl end of the proenzyme. The post-translation cleavage follows an unusual pathway, termed non-hydrolytic serinolysis, in which the side chain hydroxyl group of the serine supplies its oxygen atom to form the C-terminus of the beta chain, while the remainder of the serine residue undergoes an oxidative deamination to produce ammonia and the pyruvoyl group blocking the N-terminus of the alpha chain. In terms of tissue distribution, expressed in embryonic stem cells; subsequently down-regulated in differentiating neural precursor cells.

It catalyses the reaction S-adenosyl-L-methionine + H(+) = S-adenosyl 3-(methylsulfanyl)propylamine + CO2. It functions in the pathway amine and polyamine biosynthesis; S-adenosylmethioninamine biosynthesis; S-adenosylmethioninamine from S-adenosyl-L-methionine: step 1/1. Essential for biosynthesis of the polyamines spermidine and spermine. Promotes maintenance and self-renewal of embryonic stem cells, by maintaining spermine levels. In Mus musculus (Mouse), this protein is S-adenosylmethionine decarboxylase proenzyme 1 (Amd1).